A 1222-amino-acid polypeptide reads, in one-letter code: Chitin synthase 4 (1222 aa).

Residues 1–108 are disordered; that stretch reads MSLPERPGGI…NRIDKDHPNY (108 aa). A compositionally biased stretch (polar residues) spans 51 to 68; it reads LSANSFAETIPSPNNSFV. N-linked (GlcNAc...) asparagine glycosylation is present at asparagine 64. The span at 94–107 shows a compositional bias: basic and acidic residues; sequence IRPERNRIDKDHPN. The N-linked (GlcNAc...) asparagine glycan is linked to asparagine 116. Residues 136 to 199 form a disordered region; that stretch reads TTDVSGSRSQ…KSTKKRSTPQ (64 aa). Over residues 137–154 the composition is skewed to polar residues; sequence TDVSGSRSQTLDGVSDTS. A compositionally biased stretch (basic residues) spans 176 to 196; it reads SAKRVSRHKSGKITKSTKKRS. The next 2 membrane-spanning stretches (helical) occupy residues 204–224 and 242–262; these read PPSF…DFML and MGLI…TFGF. Asparagine 378 and asparagine 418 each carry an N-linked (GlcNAc...) asparagine glycan. A helical transmembrane segment spans residues 509-529; it reads YVFLALILSVVGSRFVLALIF. Residues 595 to 662 form a disordered region; sequence RFSTVYGPDR…PPSDGPGPAG (68 aa). The span at 608-643 shows a compositional bias: polar residues; that stretch reads NKRVPTTMASSGGSGSQLLHPNSMYRQGNDSRSSFL. 2 N-linked (GlcNAc...) asparagine glycosylation sites follow: asparagine 636 and asparagine 1031. The next 3 membrane-spanning stretches (helical) occupy residues 1056–1076, 1090–1110, and 1116–1136; these read FIVF…AFTF, VIPL…IVIT, and YLVW…VLPV. The interval 1201–1222 is disordered; sequence GGGNSWSMPPGHQYHDDYYSDA. A compositionally biased stretch (basic and acidic residues) spans 1213-1222; it reads QYHDDYYSDA.

This sequence belongs to the chitin synthase family. Class IV subfamily.

It is found in the cell membrane. It carries out the reaction [(1-&gt;4)-N-acetyl-beta-D-glucosaminyl](n) + UDP-N-acetyl-alpha-D-glucosamine = [(1-&gt;4)-N-acetyl-beta-D-glucosaminyl](n+1) + UDP + H(+). In terms of biological role, polymerizes chitin, a structural polymer of the cell wall and septum, by transferring the sugar moiety of UDP-GlcNAc to the non-reducing end of the growing chitin polymer. Plays a role in cell wall integrity and is involved in tolerance to hyperosmotic conditions. Required to successfully penetrate the host plants and thus plays a key role in pathogenicity. The protein is Chitin synthase 4 of Verticillium dahliae (strain VdLs.17 / ATCC MYA-4575 / FGSC 10137) (Verticillium wilt).